We begin with the raw amino-acid sequence, 577 residues long: Arginine--tRNA ligase (577 aa).

A 'HIGH' region motif is present at residues 122-132 (PNVAKEMHVGH).

Belongs to the class-I aminoacyl-tRNA synthetase family. As to quaternary structure, monomer.

The protein resides in the cytoplasm. It catalyses the reaction tRNA(Arg) + L-arginine + ATP = L-arginyl-tRNA(Arg) + AMP + diphosphate. This Aliivibrio fischeri (strain ATCC 700601 / ES114) (Vibrio fischeri) protein is Arginine--tRNA ligase.